The following is a 99-amino-acid chain: Indole-3-acetic acid-induced protein ARG2 (99 aa).

Residues 40-62 (RGGASIGGNMVPKSGEEKVRGGE) form a disordered region. The segment covering 53-62 (SGEEKVRGGE) has biased composition (basic and acidic residues).

The sequence is that of Indole-3-acetic acid-induced protein ARG2 (ARG2) from Vigna radiata var. radiata (Mung bean).